Here is a 256-residue protein sequence, read N- to C-terminus: (E)-benzylidenesuccinyl-CoA hydratase (256 aa).

E110 (nucleophile) is an active-site residue. The active-site Proton acceptor is E130.

The protein belongs to the enoyl-CoA hydratase/isomerase family. In terms of assembly, homotrimer.

It carries out the reaction (2S)-[(R)-hydroxy(phenyl)methyl]succinyl-CoA = (E)-2-benzylidenesuccinyl-CoA + H2O. The protein operates within xenobiotic degradation; toluene degradation. In terms of biological role, involved in an anaerobic toluene degradation pathway. Catalyzes the hydration of (E)-2-benzylidenesuccinyl-CoA to the corresponding alcohol intermediate, 2-(alpha-hydroxybenzyl)succinyl-CoA. Also accepts the N-acetylcysteamine (NAC) thioester of (E)-benzylidenesuccinate. This chain is (E)-benzylidenesuccinyl-CoA hydratase, found in Thauera aromatica.